The following is a 98-amino-acid chain: Large ribosomal subunit protein uL23 (98 aa).

This sequence belongs to the universal ribosomal protein uL23 family. As to quaternary structure, part of the 50S ribosomal subunit. Contacts protein L29, and trigger factor when it is bound to the ribosome.

Functionally, one of the early assembly proteins it binds 23S rRNA. One of the proteins that surrounds the polypeptide exit tunnel on the outside of the ribosome. Forms the main docking site for trigger factor binding to the ribosome. The sequence is that of Large ribosomal subunit protein uL23 from Parafrankia sp. (strain EAN1pec).